The primary structure comprises 305 residues: Oxygen-dependent coproporphyrinogen-III oxidase (305 aa).

Residue serine 98 participates in substrate binding. Residues histidine 102 and histidine 112 each contribute to the a divalent metal cation site. Histidine 112 (proton donor) is an active-site residue. 114 to 116 (NVR) contacts substrate. A divalent metal cation contacts are provided by histidine 151 and histidine 181. The important for dimerization stretch occupies residues 246-281 (YVEFNLVYDRGTLFGLQSGGRTESILMSMPPLARWE). 264–266 (GGR) contacts substrate.

This sequence belongs to the aerobic coproporphyrinogen-III oxidase family. As to quaternary structure, homodimer. Requires a divalent metal cation as cofactor.

It localises to the cytoplasm. It catalyses the reaction coproporphyrinogen III + O2 + 2 H(+) = protoporphyrinogen IX + 2 CO2 + 2 H2O. It participates in porphyrin-containing compound metabolism; protoporphyrin-IX biosynthesis; protoporphyrinogen-IX from coproporphyrinogen-III (O2 route): step 1/1. Its function is as follows. Involved in the heme biosynthesis. Catalyzes the aerobic oxidative decarboxylation of propionate groups of rings A and B of coproporphyrinogen-III to yield the vinyl groups in protoporphyrinogen-IX. This Vibrio parahaemolyticus serotype O3:K6 (strain RIMD 2210633) protein is Oxygen-dependent coproporphyrinogen-III oxidase.